Consider the following 469-residue polypeptide: UDP-N-acetylmuramate--L-alanine ligase (469 aa).

An ATP-binding site is contributed by 113-119; that stretch reads GAHGKTT.

The protein belongs to the MurCDEF family.

The protein localises to the cytoplasm. The enzyme catalyses UDP-N-acetyl-alpha-D-muramate + L-alanine + ATP = UDP-N-acetyl-alpha-D-muramoyl-L-alanine + ADP + phosphate + H(+). It participates in cell wall biogenesis; peptidoglycan biosynthesis. Cell wall formation. This Syntrophobacter fumaroxidans (strain DSM 10017 / MPOB) protein is UDP-N-acetylmuramate--L-alanine ligase.